Reading from the N-terminus, the 738-residue chain is MSSSSKDSSFQVETPVQNILETSTNSELQDQVSSPYEPDYNSPVKQAAASISALQTQDDTLFNNVDERTLENKDGNKSDDANFDQVSGIPSGSLEIPILNSATSNIRLTPSDTYNNIPVSDTNNEEISKNIYGAPILESTSSDFQSKDSLSTTQPSVSGGNGSTSQSPPSLDVEQNKPFSISNEPVEQETENSSTKDLQVYDFQTASEHLPEQSLQNTTYYDPSKTYSSVNFEEIEYGKSHEKLDLPYRTTDFIPYSKDLSTSPEAHRTSIYSYSANLPNYYNEHNELHEHHNPQTPSSPESAYSPENLQLNHEAQNVEYLGNNAAEKSLQMNLEDEQRFQQFLKDEESIMSNWYPGQFPSASRLFLGHLNTKSLSKRNLWKVFKIYGPLAQIVLKANYGFVQFFTNEDCARALNAEQGNFVRGQKLHLEISKIQKKYQNQIENMKKGSHVTKSNQYSEMIGNLPYPTSSRKRTRSPLMSKGKSYDRKGSISMSKNFSPDCEILVTEDCPKEFVWGVEKVFQERRLNIHTTCLYRDSNLQVIIKSCIINSVKSIILINAGLAHLGKVSVQVFKDGSSDSEVRCDEYAAVDVMVAASIVHHAKTSLMHSAASSTPSYNGERIVPDVPSPCISTNPNLPALVGSLDSVNLHHLLGFIQNTYSTTSYIPTRVSFNPNDTGGSFGTITSQSQFVVNEMPKNYARDNYEALHSQESRQRSSVAGNKQLQKILEQLAELKQPDF.

Polar residues-rich tracts occupy residues 1-34 (MSSSSKDSSFQVETPVQNILETSTNSELQDQVSS), 140-169 (TSSDFQSKDSLSTTQPSVSGGNGSTSQSPP), and 177-197 (KPFSISNEPVEQETENSSTKD). Disordered stretches follow at residues 1 to 51 (MSSS…AASI) and 140 to 197 (TSSD…STKD). The region spanning 363-434 (SRLFLGHLNT…QKLHLEISKI (72 aa)) is the RRM domain. Residues 466 to 487 (YPTSSRKRTRSPLMSKGKSYDR) form a disordered region.

This is an uncharacterized protein from Schizosaccharomyces pombe (strain 972 / ATCC 24843) (Fission yeast).